Consider the following 353-residue polypeptide: Probable dual-specificity RNA methyltransferase RlmN (353 aa).

Glu104 acts as the Proton acceptor in catalysis. A Radical SAM core domain is found at 112–341 (DGGRKTICIS…ILNRRSPGKD (230 aa)). Cys119 and Cys346 are joined by a disulfide. [4Fe-4S] cluster contacts are provided by Cys126, Cys130, and Cys133. S-adenosyl-L-methionine contacts are provided by residues 173–174 (GE), Ser205, 228–230 (SLN), and Asn304. Catalysis depends on Cys346, which acts as the S-methylcysteine intermediate.

This sequence belongs to the radical SAM superfamily. RlmN family. [4Fe-4S] cluster is required as a cofactor.

The protein resides in the cytoplasm. The catalysed reaction is adenosine(2503) in 23S rRNA + 2 reduced [2Fe-2S]-[ferredoxin] + 2 S-adenosyl-L-methionine = 2-methyladenosine(2503) in 23S rRNA + 5'-deoxyadenosine + L-methionine + 2 oxidized [2Fe-2S]-[ferredoxin] + S-adenosyl-L-homocysteine. It carries out the reaction adenosine(37) in tRNA + 2 reduced [2Fe-2S]-[ferredoxin] + 2 S-adenosyl-L-methionine = 2-methyladenosine(37) in tRNA + 5'-deoxyadenosine + L-methionine + 2 oxidized [2Fe-2S]-[ferredoxin] + S-adenosyl-L-homocysteine. In terms of biological role, specifically methylates position 2 of adenine 2503 in 23S rRNA and position 2 of adenine 37 in tRNAs. In Leptospira interrogans serogroup Icterohaemorrhagiae serovar copenhageni (strain Fiocruz L1-130), this protein is Probable dual-specificity RNA methyltransferase RlmN.